The sequence spans 670 residues: Mannosyl-oligosaccharide alpha-1,2-mannosidase IA (670 aa).

Over 1–30 (MTGILPTYQRFVNGVPVPSISRRSFRLREK) the chain is Cytoplasmic. The chain crosses the membrane as a helical; Signal-anchor for type II membrane protein span at residues 31-51 (YLIVSVLLTFGIVWLGALFYL). The Lumenal portion of the chain corresponds to 52–670 (PEFKSSNSVN…EPAHAQNNRI (619 aa)). An N-linked (GlcNAc...) asparagine glycan is attached at Asn61. A disordered region spans residues 135–177 (DVAPSVSSSRGPSKPPVDAIEEPAVGNNAANKDVSPSGPKAES). Residues Cys480 and Cys512 are joined by a disulfide bond. The active-site Proton donor is the Glu526. A Ca(2+)-binding site is contributed by Thr637.

This sequence belongs to the glycosyl hydrolase 47 family. Ca(2+) is required as a cofactor. Post-translationally, N-glycosylated. Contains high mannose-type oligosaccharides.

It localises to the golgi apparatus membrane. It catalyses the reaction N(4)-(alpha-D-Man-(1-&gt;2)-alpha-D-Man-(1-&gt;2)-alpha-D-Man-(1-&gt;3)-[alpha-D-Man-(1-&gt;2)-alpha-D-Man-(1-&gt;3)-[alpha-D-Man-(1-&gt;2)-alpha-D-Man-(1-&gt;6)]-alpha-D-Man-(1-&gt;6)]-beta-D-Man-(1-&gt;4)-beta-D-GlcNAc-(1-&gt;4)-beta-D-GlcNAc)-L-asparaginyl-[protein] (N-glucan mannose isomer 9A1,2,3B1,2,3) + 4 H2O = N(4)-(alpha-D-Man-(1-&gt;3)-[alpha-D-Man-(1-&gt;3)-[alpha-D-Man-(1-&gt;6)]-alpha-D-Man-(1-&gt;6)]-beta-D-Man-(1-&gt;4)-beta-D-GlcNAc-(1-&gt;4)-beta-D-GlcNAc)-L-asparaginyl-[protein] (N-glucan mannose isomer 5A1,2) + 4 beta-D-mannose. The enzyme catalyses N(4)-(alpha-D-Man-(1-&gt;2)-alpha-D-Man-(1-&gt;2)-alpha-D-Man-(1-&gt;3)-[alpha-D-Man-(1-&gt;3)-[alpha-D-Man-(1-&gt;2)-alpha-D-Man-(1-&gt;6)]-alpha-D-Man-(1-&gt;6)]-beta-D-Man-(1-&gt;4)-beta-D-GlcNAc-(1-&gt;4)-beta-D-GlcNAc)-L-asparaginyl-[protein] (N-glucan mannose isomer 8A1,2,3B1,3) + 3 H2O = N(4)-(alpha-D-Man-(1-&gt;3)-[alpha-D-Man-(1-&gt;3)-[alpha-D-Man-(1-&gt;6)]-alpha-D-Man-(1-&gt;6)]-beta-D-Man-(1-&gt;4)-beta-D-GlcNAc-(1-&gt;4)-beta-D-GlcNAc)-L-asparaginyl-[protein] (N-glucan mannose isomer 5A1,2) + 3 beta-D-mannose. It participates in protein modification; protein glycosylation. Strongly inhibited by 1-deoxymannojirimycin, an inhibitor of class I alpha-mannosidases, and by EDTA. EDTA inhibition is reversed by the addition of calcium, but not of magnesium. In terms of biological role, involved in the maturation of Asn-linked oligosaccharides. Converts Man(9)GlcNAc(2) to Man(5)GlcNAc(2) primarily through the Man(7)GlcNAc(2) isomer C processing intermediate. This is Mannosyl-oligosaccharide alpha-1,2-mannosidase IA from Spodoptera frugiperda (Fall armyworm).